The sequence spans 519 residues: Flavonoid 8-hydroxylase 2, chloroplastic (519 aa).

A chloroplast-targeting transit peptide spans 1–46; the sequence is MEVLQASSLSFQLLRRHSRNNLINKFRNPSLPRIHMPRQNIDLKTF. The 112-residue stretch at 77-188 folds into the Rieske domain; that stretch reads WYPVASVCDL…SCVRNGIVWF (112 aa). 4 residues coordinate [2Fe-2S] cluster: Cys119, His121, Cys139, and His142. 2 residues coordinate Fe cation: His241 and His246. The Redox-active motif signature appears at 447–450; that stretch reads CSSC. 2 consecutive transmembrane segments (helical) span residues 462-478 and 485-501; these read IGLQAMSLVFVAMAAAV and YSMVAMAVLSFLASKWL.

[2Fe-2S] cluster is required as a cofactor. As to expression, glandular trichome-specific expression in leaves.

It localises to the plastid. It is found in the chloroplast membrane. The protein localises to the cytoplasm. It carries out the reaction salvigenin + 2 reduced [2Fe-2S]-[ferredoxin] + O2 + 2 H(+) = 8-hydroxysalvigenin + 2 oxidized [2Fe-2S]-[ferredoxin] + H2O. It functions in the pathway flavonoid metabolism. Rieske-type, PAO-family oxygenase involved in the biosynthesis of polymethoxylated flavonoids natural products such as nevadensin and salvigenin, aroma compounds which contribute to the flavor of sweet basil, and exhibit pharmacological activities such as anti-allergic, anti-oxidant, antibacterial, anti-proliferative, and anti-inflammatory effects. Catalyzes the hydroxylation of salvigenin to produce 8-hydroxysalvigenin (8-OH-SALV). In Ocimum basilicum (Sweet basil), this protein is Flavonoid 8-hydroxylase 2, chloroplastic.